Consider the following 407-residue polypeptide: 1-deoxy-D-xylulose 5-phosphate reductoisomerase (407 aa).

Residues Thr25, Gly26, Ser27, Ile28, Asn53, and Asn136 each coordinate NADPH. Lys137 provides a ligand contact to 1-deoxy-D-xylulose 5-phosphate. Glu138 provides a ligand contact to NADPH. Asp162 contacts Mn(2+). Ser163, Glu164, Ser188, and His211 together coordinate 1-deoxy-D-xylulose 5-phosphate. Residue Glu164 coordinates Mn(2+). Position 217 (Gly217) interacts with NADPH. 4 residues coordinate 1-deoxy-D-xylulose 5-phosphate: Ser224, Asn229, Lys230, and Glu233. Glu233 is a binding site for Mn(2+).

It belongs to the DXR family. Requires Mg(2+) as cofactor. The cofactor is Mn(2+).

It carries out the reaction 2-C-methyl-D-erythritol 4-phosphate + NADP(+) = 1-deoxy-D-xylulose 5-phosphate + NADPH + H(+). The protein operates within isoprenoid biosynthesis; isopentenyl diphosphate biosynthesis via DXP pathway; isopentenyl diphosphate from 1-deoxy-D-xylulose 5-phosphate: step 1/6. Catalyzes the NADPH-dependent rearrangement and reduction of 1-deoxy-D-xylulose-5-phosphate (DXP) to 2-C-methyl-D-erythritol 4-phosphate (MEP). In Nitrobacter hamburgensis (strain DSM 10229 / NCIMB 13809 / X14), this protein is 1-deoxy-D-xylulose 5-phosphate reductoisomerase.